Here is a 245-residue protein sequence, read N- to C-terminus: tRNA1(Val) (adenine(37)-N6)-methyltransferase (245 aa).

This sequence belongs to the methyltransferase superfamily. tRNA (adenine-N(6)-)-methyltransferase family.

Its subcellular location is the cytoplasm. The catalysed reaction is adenosine(37) in tRNA1(Val) + S-adenosyl-L-methionine = N(6)-methyladenosine(37) in tRNA1(Val) + S-adenosyl-L-homocysteine + H(+). Its function is as follows. Specifically methylates the adenine in position 37 of tRNA(1)(Val) (anticodon cmo5UAC). This is tRNA1(Val) (adenine(37)-N6)-methyltransferase from Escherichia coli O139:H28 (strain E24377A / ETEC).